Reading from the N-terminus, the 329-residue chain is Lipoyl synthase (329 aa).

Residues Cys72, Cys77, Cys83, Cys98, Cys102, Cys105, and Ser313 each contribute to the [4Fe-4S] cluster site. Positions 83–303 (CWSHGTATIM…QIGLKKGFFE (221 aa)) constitute a Radical SAM core domain.

Belongs to the radical SAM superfamily. Lipoyl synthase family. The cofactor is [4Fe-4S] cluster.

The protein localises to the cytoplasm. The enzyme catalyses [[Fe-S] cluster scaffold protein carrying a second [4Fe-4S](2+) cluster] + N(6)-octanoyl-L-lysyl-[protein] + 2 oxidized [2Fe-2S]-[ferredoxin] + 2 S-adenosyl-L-methionine + 4 H(+) = [[Fe-S] cluster scaffold protein] + N(6)-[(R)-dihydrolipoyl]-L-lysyl-[protein] + 4 Fe(3+) + 2 hydrogen sulfide + 2 5'-deoxyadenosine + 2 L-methionine + 2 reduced [2Fe-2S]-[ferredoxin]. It participates in protein modification; protein lipoylation via endogenous pathway; protein N(6)-(lipoyl)lysine from octanoyl-[acyl-carrier-protein]: step 2/2. Catalyzes the radical-mediated insertion of two sulfur atoms into the C-6 and C-8 positions of the octanoyl moiety bound to the lipoyl domains of lipoate-dependent enzymes, thereby converting the octanoylated domains into lipoylated derivatives. This Legionella pneumophila (strain Corby) protein is Lipoyl synthase.